The primary structure comprises 357 residues: Transactivator protein DR7 (357 aa).

An interaction with host p53 region spans residues 107-187 (LVGKDGAVYV…LLTVGGLCQT (81 aa)).

The protein belongs to the herpesviridae US22 family. As to quaternary structure, interacts with host p53 and inhibits p53-activated transcription.

Its function is as follows. Involved in transactivation. Displays transforming activity. The chain is Transactivator protein DR7 (DR7L) from Homo sapiens (Human).